We begin with the raw amino-acid sequence, 273 residues long: Dermonecrotic toxin LamSicTox-alphaIC1 (273 aa).

The active site involves histidine 5. The Mg(2+) site is built by glutamate 25 and aspartate 27. Histidine 41 acts as the Nucleophile in catalysis. Intrachain disulfides connect cysteine 45–cysteine 51 and cysteine 47–cysteine 190. Aspartate 85 provides a ligand contact to Mg(2+).

Belongs to the arthropod phospholipase D family. Class II subfamily. Requires Mg(2+) as cofactor. As to expression, expressed by the venom gland.

The protein localises to the secreted. It carries out the reaction an N-(acyl)-sphingosylphosphocholine = an N-(acyl)-sphingosyl-1,3-cyclic phosphate + choline. The enzyme catalyses an N-(acyl)-sphingosylphosphoethanolamine = an N-(acyl)-sphingosyl-1,3-cyclic phosphate + ethanolamine. The catalysed reaction is a 1-acyl-sn-glycero-3-phosphocholine = a 1-acyl-sn-glycero-2,3-cyclic phosphate + choline. It catalyses the reaction a 1-acyl-sn-glycero-3-phosphoethanolamine = a 1-acyl-sn-glycero-2,3-cyclic phosphate + ethanolamine. Its function is as follows. Dermonecrotic toxins cleave the phosphodiester linkage between the phosphate and headgroup of certain phospholipids (sphingolipid and lysolipid substrates), forming an alcohol (often choline) and a cyclic phosphate. This toxin acts on sphingomyelin (SM). It may also act on ceramide phosphoethanolamine (CPE), lysophosphatidylcholine (LPC) and lysophosphatidylethanolamine (LPE), but not on lysophosphatidylserine (LPS), and lysophosphatidylglycerol (LPG). It acts by transphosphatidylation, releasing exclusively cyclic phosphate products as second products. Induces dermonecrosis, hemolysis, increased vascular permeability, edema, inflammatory response, and platelet aggregation. The polypeptide is Dermonecrotic toxin LamSicTox-alphaIC1 (Loxosceles amazonica (Recluse spider)).